The sequence spans 426 residues: Histidine--tRNA ligase (426 aa).

This sequence belongs to the class-II aminoacyl-tRNA synthetase family. Homodimer.

The protein resides in the cytoplasm. It catalyses the reaction tRNA(His) + L-histidine + ATP = L-histidyl-tRNA(His) + AMP + diphosphate + H(+). The protein is Histidine--tRNA ligase of Streptococcus equi subsp. zooepidemicus (strain H70).